The sequence spans 417 residues: MDLFSSLPDEVLCHILSFLTTKEAALASVVSKRWRNQFALVPNLDIDEEGKREREEILLSFMDFVDNVLALQADSPIKKFSLKCKTGVHPRRLDAWARLGPVLPMLKTLIIDSAWIRCDTIETFLPTFPVLEELSMSINEWPDWDETVTSASLRKLSIFTIGCENFSNPKSISFDIPSLVYFEYYDMVAEDYPKVNLTSVVEARISLLLDQDQIKRGRAPNNDEDDVLLRLRNGWKLMSGIRNVQKLYISLDTLQVLSLCCKSMPVFNNLKLLSVKTAENEGWEGMPVLLRNCPHLETLVFEGLRHFVTNKCGDACDYVSREDKGRSLVSCPVKKLQIKGFRGTIRELEMIKHFLYSFRCLEKVEIYAEEKGRTRTDLEVPGMFELIARMLRLYNEFYSCDVQFLVRSSLDKKWTAQ.

Residues 1 to 53 (MDLFSSLPDEVLCHILSFLTTKEAALASVVSKRWRNQFALVPNLDIDEEGKRE) form the F-box domain.

The protein is Putative F-box protein At3g58950 of Arabidopsis thaliana (Mouse-ear cress).